The primary structure comprises 152 residues: Transcription elongation factor Spt5 (152 aa).

Positions Pro99 to Val128 constitute a KOW domain.

Belongs to the archaeal Spt5 family. As to quaternary structure, heterodimer composed of Spt4 and Spt5. Interacts with RNA polymerase (RNAP).

Its function is as follows. Stimulates transcription elongation. This Saccharolobus solfataricus (strain ATCC 35092 / DSM 1617 / JCM 11322 / P2) (Sulfolobus solfataricus) protein is Transcription elongation factor Spt5.